The chain runs to 239 residues: Purine nucleoside phosphorylase DeoD-type (239 aa).

Residue His5 coordinates a purine D-ribonucleoside. Phosphate is bound by residues Gly21, Arg25, Arg44, and 88–91 (RVGS). Residues 180-182 (EME) and 204-205 (SD) each bind a purine D-ribonucleoside. Asp205 (proton donor) is an active-site residue.

It belongs to the PNP/UDP phosphorylase family. Homohexamer; trimer of homodimers.

The catalysed reaction is a purine D-ribonucleoside + phosphate = a purine nucleobase + alpha-D-ribose 1-phosphate. It catalyses the reaction a purine 2'-deoxy-D-ribonucleoside + phosphate = a purine nucleobase + 2-deoxy-alpha-D-ribose 1-phosphate. In terms of biological role, catalyzes the reversible phosphorolytic breakdown of the N-glycosidic bond in the beta-(deoxy)ribonucleoside molecules, with the formation of the corresponding free purine bases and pentose-1-phosphate. The protein is Purine nucleoside phosphorylase DeoD-type of Klebsiella pneumoniae (strain 342).